The chain runs to 544 residues: Chaperonin GroEL (544 aa).

Residues 30–33 (TLGP), Lys-51, 87–91 (DGTTT), Gly-415, 481–483 (DAL), and Asp-497 contribute to the ATP site.

This sequence belongs to the chaperonin (HSP60) family. In terms of assembly, forms a cylinder of 14 subunits composed of two heptameric rings stacked back-to-back. Interacts with the co-chaperonin GroES.

It localises to the cytoplasm. The enzyme catalyses ATP + H2O + a folded polypeptide = ADP + phosphate + an unfolded polypeptide.. Functionally, together with its co-chaperonin GroES, plays an essential role in assisting protein folding. The GroEL-GroES system forms a nano-cage that allows encapsulation of the non-native substrate proteins and provides a physical environment optimized to promote and accelerate protein folding. The protein is Chaperonin GroEL of Chlamydia muridarum (strain MoPn / Nigg).